A 309-amino-acid chain; its full sequence is tRNA pseudouridine synthase B (309 aa).

Residue Asp-39 is the Nucleophile of the active site.

It belongs to the pseudouridine synthase TruB family. Type 1 subfamily.

The enzyme catalyses uridine(55) in tRNA = pseudouridine(55) in tRNA. In terms of biological role, responsible for synthesis of pseudouridine from uracil-55 in the psi GC loop of transfer RNAs. This Bacillus pumilus (strain SAFR-032) protein is tRNA pseudouridine synthase B.